The sequence spans 347 residues: Leucine-rich repeat-containing protein 69 (347 aa).

LRR repeat units follow at residues 15 to 37, 38 to 60, 61 to 82, 84 to 105, 108 to 129, 131 to 152, 154 to 175, 177 to 198, and 200 to 222; these read NTKI…EKLP, NLKT…RTLT, QLTL…IKYL, SLKN…VFNG, RLIM…IGRL, SLTY…LCSL, HLSE…IKFL, NLQQ…ICHL, and KLRV…QNLR.

Belongs to the LRRC69 family.

This is Leucine-rich repeat-containing protein 69 (Lrrc69) from Mus musculus (Mouse).